The primary structure comprises 256 residues: Acidic leucine-rich nuclear phosphoprotein 32 family member E (256 aa).

LRR repeat units follow at residues 43 to 64 (ELEFLSMANVQLTSLAKLPTLS), 65 to 87 (KLRKLELSDNIISGGLEVLAERC), and 89 to 110 (NLTYLNLSGNKIKDLGTVEALQ). In terms of domain architecture, LRRCT spans 123–161 (CEITNLEDYRDSIFDLLQQITYLDGFDQEDNEAPDSEDD). The disordered stretch occupies residues 147-256 (GFDQEDNEAP…PEDEGEEEDD (110 aa)). Composition is skewed to acidic residues over residues 148 to 205 (FDQE…EEEV) and 215 to 235 (IQDEDDDDDYVEEGGDEEEEA). The segment at 204–256 (EVGLSYLMKEEIQDEDDDDDYVEEGGDEEEEAEGIRGEKRKRDPEDEGEEEDD) is ZID domain. Basic and acidic residues predominate over residues 236–247 (EGIRGEKRKRDP).

Belongs to the ANP32 family. In terms of assembly, component of a SWR1-like complex. Interacts with H2A.Z/H2AZ1.

The protein resides in the cytoplasm. It is found in the nucleus. Functionally, histone chaperone that specifically mediates the genome-wide removal of histone H2A.Z/H2AZ1 from the nucleosome: removes H2A.Z/H2AZ1 from its normal sites of deposition, especially from enhancer and insulator regions. Not involved in deposition of H2A.Z/H2AZ1 in the nucleosome. May stabilize the evicted H2A.Z/H2AZ1-H2B dimer, thus shifting the equilibrium towards dissociation and the off-chromatin state. Inhibits activity of protein phosphatase 2A (PP2A). Does not inhibit protein phosphatase 1. May play a role in cerebellar development and synaptogenesis. The protein is Acidic leucine-rich nuclear phosphoprotein 32 family member E (ANP32E) of Gallus gallus (Chicken).